Reading from the N-terminus, the 90-residue chain is Protein Z600 (90 aa).

Phosphothreonine is present on residues Thr-22 and Thr-48. Residues 46–65 form a disordered region; that stretch reads PATPSSSGHGKFQTELKKRR.

As to quaternary structure, component of the Frs-CycA-Cdk1 complex composed of Z600, CycA and Cdk1. Interacts preferentially with CycA (via C-terminus) but is also able to interact (via C-terminus) with CycE (via C-terminus).

The protein resides in the nucleus. Its function is as follows. Cell cycle regulator that is involved in modulating and adjusting cell proliferation according to the requirements of the developmental program. Interacts with mitotic Cdk1-cyclin complexes to inhibit mitotic entry at the G2/M transition. Likely to function by binding to the hydrophobic patch of cyclins to interfere with the interaction between the complex and certain Cdk1 substrates. At the mid-blastula transition, involved in the cell cycle arrest in G2 of cycle 14 by delaying mitosis and thus reducing cell proliferation allowing cell fate specification and morphogenesis to take place. Acts downstream or in parallel to the checkpoint regulator grp which is also required for the cell cycle pause at cycle 14. During gastrulation, delays mitosis in the ventral region of the embryonic mesoderm thus allowing invagination to be completed before cell division takes place. The sequence is that of Protein Z600 from Drosophila melanogaster (Fruit fly).